We begin with the raw amino-acid sequence, 221 residues long: Stromal cell-derived factor 2-like protein 1 (221 aa).

The N-terminal stretch at 1–28 (MWSAGRGGAAWPVLLGLLLALLVPGGGA) is a signal peptide. MIR domains lie at 33-87 (AELV…IRGG), 95-150 (GSPV…VRCS), and 151-205 (GQHW…AMEG). Phosphoserine is present on Ser215. The short motif at 218-221 (HDEL) is the Prevents secretion from ER element.

In terms of assembly, part of a large chaperone multiprotein complex comprising CABP1, DNAJB11, HSP90B1, HSPA5, HYOU, PDIA2, PDIA4, PPIB, SDF2L1, UGGT1 and very small amounts of ERP29, but not, or at very low levels, CALR nor CANX. In terms of tissue distribution, ubiquitously expressed with high expression in testis, moderate expression in the pancreas, spleen, prostate, small intestine and colon. Very low expression is seen in brain and skeletal muscle.

It localises to the endoplasmic reticulum lumen. The polypeptide is Stromal cell-derived factor 2-like protein 1 (SDF2L1) (Homo sapiens (Human)).